The following is a 731-amino-acid chain: 1,4-alpha-glucan branching enzyme GlgB (731 aa).

Catalysis depends on D411, which acts as the Nucleophile. E464 serves as the catalytic Proton donor.

It belongs to the glycosyl hydrolase 13 family. GlgB subfamily. In terms of assembly, monomer.

It carries out the reaction Transfers a segment of a (1-&gt;4)-alpha-D-glucan chain to a primary hydroxy group in a similar glucan chain.. It functions in the pathway glycan biosynthesis; glycogen biosynthesis. Functionally, catalyzes the formation of the alpha-1,6-glucosidic linkages in glycogen by scission of a 1,4-alpha-linked oligosaccharide from growing alpha-1,4-glucan chains and the subsequent attachment of the oligosaccharide to the alpha-1,6 position. The protein is 1,4-alpha-glucan branching enzyme GlgB of Mycobacterium ulcerans (strain Agy99).